The primary structure comprises 575 residues: 2-isopropylmalate synthase (575 aa).

Residues 40-314 (PRWCAVDLRD…DPQIDFSDID (275 aa)) enclose the Pyruvate carboxyltransferase domain. Residues aspartate 49, histidine 253, histidine 255, and asparagine 289 each coordinate Mg(2+). The tract at residues 456 to 575 (SGSGTPEWGR…IVSAVNRALR (120 aa)) is regulatory domain.

It belongs to the alpha-IPM synthase/homocitrate synthase family. LeuA type 2 subfamily. In terms of assembly, homodimer. The cofactor is Mg(2+).

Its subcellular location is the cytoplasm. The catalysed reaction is 3-methyl-2-oxobutanoate + acetyl-CoA + H2O = (2S)-2-isopropylmalate + CoA + H(+). It functions in the pathway amino-acid biosynthesis; L-leucine biosynthesis; L-leucine from 3-methyl-2-oxobutanoate: step 1/4. In terms of biological role, catalyzes the condensation of the acetyl group of acetyl-CoA with 3-methyl-2-oxobutanoate (2-ketoisovalerate) to form 3-carboxy-3-hydroxy-4-methylpentanoate (2-isopropylmalate). The polypeptide is 2-isopropylmalate synthase (Kineococcus radiotolerans (strain ATCC BAA-149 / DSM 14245 / SRS30216)).